Reading from the N-terminus, the 209-residue chain is Orotate phosphoribosyltransferase (209 aa).

Residues Arg-96, Lys-100, His-102, and 122 to 130 (EDLISTGGS) each bind 5-phospho-alpha-D-ribose 1-diphosphate. Ser-126 serves as a coordination point for orotate.

It belongs to the purine/pyrimidine phosphoribosyltransferase family. PyrE subfamily. Homodimer. Requires Mg(2+) as cofactor.

The catalysed reaction is orotidine 5'-phosphate + diphosphate = orotate + 5-phospho-alpha-D-ribose 1-diphosphate. It participates in pyrimidine metabolism; UMP biosynthesis via de novo pathway; UMP from orotate: step 1/2. Functionally, catalyzes the transfer of a ribosyl phosphate group from 5-phosphoribose 1-diphosphate to orotate, leading to the formation of orotidine monophosphate (OMP). This chain is Orotate phosphoribosyltransferase, found in Streptococcus pyogenes serotype M2 (strain MGAS10270).